A 110-amino-acid chain; its full sequence is T cell receptor alpha variable 39 (110 aa).

An N-terminal signal peptide occupies residues methionine 1–glycine 18. The Ig-like domain occupies glutamate 19 to aspartate 110. Asparagine 36 and asparagine 42 each carry an N-linked (GlcNAc...) asparagine glycan. Cysteines 41 and 107 form a disulfide.

In terms of assembly, alpha-beta TR is a heterodimer composed of an alpha and beta chain; disulfide-linked. The alpha-beta TR is associated with the transmembrane signaling CD3 coreceptor proteins to form the TR-CD3 (TcR or TCR). The assembly of alpha-beta TR heterodimers with CD3 occurs in the endoplasmic reticulum where a single alpha-beta TR heterodimer associates with one CD3D-CD3E heterodimer, one CD3G-CD3E heterodimer and one CD247 homodimer forming a stable octameric structure. CD3D-CD3E and CD3G-CD3E heterodimers preferentially associate with TR alpha and TR beta chains, respectively. The association of the CD247 homodimer is the last step of TcR assembly in the endoplasmic reticulum and is required for transport to the cell surface.

It localises to the cell membrane. In terms of biological role, v region of the variable domain of T cell receptor (TR) alpha chain that participates in the antigen recognition. Alpha-beta T cell receptors are antigen specific receptors which are essential to the immune response and are present on the cell surface of T lymphocytes. Recognize peptide-major histocompatibility (MH) (pMH) complexes that are displayed by antigen presenting cells (APC), a prerequisite for efficient T cell adaptive immunity against pathogens. Binding of alpha-beta TR to pMH complex initiates TR-CD3 clustering on the cell surface and intracellular activation of LCK that phosphorylates the ITAM motifs of CD3G, CD3D, CD3E and CD247 enabling the recruitment of ZAP70. In turn ZAP70 phosphorylates LAT, which recruits numerous signaling molecules to form the LAT signalosome. The LAT signalosome propagates signal branching to three major signaling pathways, the calcium, the mitogen-activated protein kinase (MAPK) kinase and the nuclear factor NF-kappa-B (NF-kB) pathways, leading to the mobilization of transcription factors that are critical for gene expression and essential for T cell growth and differentiation. The T cell repertoire is generated in the thymus, by V-(D)-J rearrangement. This repertoire is then shaped by intrathymic selection events to generate a peripheral T cell pool of self-MH restricted, non-autoaggressive T cells. Post-thymic interaction of alpha-beta TR with the pMH complexes shapes TR structural and functional avidity. The polypeptide is T cell receptor alpha variable 39 (Homo sapiens (Human)).